The chain runs to 632 residues: Golgin subfamily A member 8J (632 aa).

The segment at Met-1–Glu-76 is disordered. 2 coiled-coil regions span residues Leu-86 to Arg-154 and Leu-220 to Ala-421. 2 stretches are compositionally biased toward basic and acidic residues: residues Lys-352–Lys-362 and His-427–Pro-440. Disordered regions lie at residues Lys-352 to Pro-377, Pro-423 to Ser-452, and Leu-496 to Glu-524. Positions Leu-508–Gly-520 are enriched in gly residues.

Belongs to the GOLGA8 family.

The sequence is that of Golgin subfamily A member 8J (GOLGA8J) from Homo sapiens (Human).